We begin with the raw amino-acid sequence, 389 residues long: Chalcone synthase E (389 aa).

Cysteine 164 is an active-site residue.

It belongs to the thiolase-like superfamily. Chalcone/stilbene synthases family.

The catalysed reaction is (E)-4-coumaroyl-CoA + 3 malonyl-CoA + 3 H(+) = 2',4,4',6'-tetrahydroxychalcone + 3 CO2 + 4 CoA. The protein operates within secondary metabolite biosynthesis; flavonoid biosynthesis. Its function is as follows. The primary product of this enzyme is 4,2',4',6'-tetrahydroxychalcone (also termed naringenin-chalcone or chalcone) which can under specific conditions spontaneously isomerize into naringenin. The chain is Chalcone synthase E (CHSE) from Ipomoea nil (Japanese morning glory).